The primary structure comprises 367 residues: 2-aminoethylphosphonate--pyruvate transaminase (367 aa).

At lysine 194 the chain carries N6-(pyridoxal phosphate)lysine.

The protein belongs to the class-V pyridoxal-phosphate-dependent aminotransferase family. PhnW subfamily. As to quaternary structure, homodimer. Requires pyridoxal 5'-phosphate as cofactor.

The catalysed reaction is (2-aminoethyl)phosphonate + pyruvate = phosphonoacetaldehyde + L-alanine. In terms of biological role, involved in phosphonate degradation. The sequence is that of 2-aminoethylphosphonate--pyruvate transaminase from Salmonella agona (strain SL483).